A 248-amino-acid polypeptide reads, in one-letter code: 3-deoxy-manno-octulosonate cytidylyltransferase (248 aa).

The protein belongs to the KdsB family.

It localises to the cytoplasm. The catalysed reaction is 3-deoxy-alpha-D-manno-oct-2-ulosonate + CTP = CMP-3-deoxy-beta-D-manno-octulosonate + diphosphate. The protein operates within nucleotide-sugar biosynthesis; CMP-3-deoxy-D-manno-octulosonate biosynthesis; CMP-3-deoxy-D-manno-octulosonate from 3-deoxy-D-manno-octulosonate and CTP: step 1/1. It functions in the pathway bacterial outer membrane biogenesis; lipopolysaccharide biosynthesis. In terms of biological role, activates KDO (a required 8-carbon sugar) for incorporation into bacterial lipopolysaccharide in Gram-negative bacteria. This is 3-deoxy-manno-octulosonate cytidylyltransferase from Escherichia coli O139:H28 (strain E24377A / ETEC).